A 110-amino-acid chain; its full sequence is Ribonuclease P protein component 1 (110 aa).

The protein belongs to the eukaryotic/archaeal RNase P protein component 1 family. Consists of a catalytic RNA component and at least 4-5 protein subunits.

It localises to the cytoplasm. The catalysed reaction is Endonucleolytic cleavage of RNA, removing 5'-extranucleotides from tRNA precursor.. Its function is as follows. Part of ribonuclease P, a protein complex that generates mature tRNA molecules by cleaving their 5'-ends. The chain is Ribonuclease P protein component 1 from Methanosarcina acetivorans (strain ATCC 35395 / DSM 2834 / JCM 12185 / C2A).